We begin with the raw amino-acid sequence, 190 residues long: Threonylcarbamoyl-AMP synthase (190 aa).

In terms of domain architecture, YrdC-like spans 7–190 (GDAIAAAIDV…ALTGELFRQG (184 aa)).

It belongs to the SUA5 family. TsaC subfamily.

The protein localises to the cytoplasm. It catalyses the reaction L-threonine + hydrogencarbonate + ATP = L-threonylcarbamoyladenylate + diphosphate + H2O. Required for the formation of a threonylcarbamoyl group on adenosine at position 37 (t(6)A37) in tRNAs that read codons beginning with adenine. Catalyzes the conversion of L-threonine, HCO(3)(-)/CO(2) and ATP to give threonylcarbamoyl-AMP (TC-AMP) as the acyladenylate intermediate, with the release of diphosphate. In Escherichia coli O6:H1 (strain CFT073 / ATCC 700928 / UPEC), this protein is Threonylcarbamoyl-AMP synthase.